The primary structure comprises 192 residues: MKRYVVGISGASGVILAVKLIKELVNAKHQVEVIISPSGRKTLYYELGCQSFDALFSEENLEYIHTHSIQAIESSLASGSCPVEATIIIPCSMTTVAAISIGLADNLLRRVADVALKERRPLILVPRETPLHTIHLENLLKLSKSGATIFPPMPMWYFKPQSVEDLENALVGKILAYLNIPSDLTKQWSNPE.

FMN-binding positions include 10 to 12 (GAS), serine 36, 92 to 95 (SMTT), and arginine 127. Dimethylallyl phosphate contacts are provided by tyrosine 157 and lysine 173.

It belongs to the UbiX/PAD1 family.

The enzyme catalyses dimethylallyl phosphate + FMNH2 = prenylated FMNH2 + phosphate. Functionally, flavin prenyltransferase that catalyzes the synthesis of the prenylated FMN cofactor (prenyl-FMN) for 4-hydroxy-3-polyprenylbenzoic acid decarboxylase UbiD. The prenyltransferase is metal-independent and links a dimethylallyl moiety from dimethylallyl monophosphate (DMAP) to the flavin N5 and C6 atoms of FMN. The polypeptide is Flavin prenyltransferase UbiX (Chlamydia pneumoniae (Chlamydophila pneumoniae)).